The primary structure comprises 282 residues: Benzoyl-CoA reductase subunit D (282 aa).

Positions 130 and 169 each coordinate [4Fe-4S] cluster.

Heterotetramer composed of A, B, C, and D subunits. The cofactor is [4Fe-4S] cluster.

The enzyme catalyses cyclohexa-1,5-diene-1-carbonyl-CoA + oxidized 2[4Fe-4S]-[ferredoxin] + 2 ADP + 2 phosphate = reduced 2[4Fe-4S]-[ferredoxin] + benzoyl-CoA + 2 ATP + 2 H2O. The catalysed reaction is 3-hydroxybenzoyl-CoA + AH2 + 2 ATP + 2 H2O = 3-hydroxycyclohexa-1,5-diene-1-carbonyl-CoA + A + 2 ADP + 2 phosphate + 2 H(+). Functionally, catalyzes the anaerobic reduction of benzoyl-CoA and 3-hydroxybenzoyl-CoA to form cyclohexa-1,5-diene-1-carbonyl-CoA and 3-hydroxycyclohexa-1,5-diene-1-carbonyl-CoA, respectively. The enzyme also reduces other benzoyl-CoA analogs with small substituents at the aromatic ring. The protein is Benzoyl-CoA reductase subunit D (bcrD) of Thauera aromatica.